An 865-amino-acid polypeptide reads, in one-letter code: TATA box-binding protein-associated factor RNA polymerase I subunit B (865 aa).

The RRN7-type zinc finger occupies 1–33 (MHSAKNEKCNACGGYRFSVNDGFKYCDRCGALF). Positions 9, 12, 26, and 29 each coordinate Zn(2+). The segment at 35 to 99 (NFEELEEEEG…DFLQQQAIKG (65 aa)) is B-reader. The tract at residues 100–111 (EELELPHDATPD) is B-linker. The segment at 112–348 (YLYRLALRLF…SQPERMKQGE (237 aa)) is N-terminal cyclin fold. The tract at residues 233–261 (DEDGDQDAQGGQQLDDLTLETTQNPDESI) is disordered. Low complexity predominate over residues 239–248 (DAQGGQQLDD). A compositionally biased stretch (polar residues) spans 252–261 (ETTQNPDESI). The interval 349 to 496 (VVKPTIVDYA…LLTLRLTFQL (148 aa)) is C-terminal cyclin fold.

The protein belongs to the RRN7/TAF1B family.

It localises to the nucleus. The protein localises to the nucleolus. Its function is as follows. Component of RNA polymerase I core factor complex that acts as a GTF2B/TFIIB-like factor and plays a key role in multiple steps during transcription initiation such as pre-initiation complex (PIC) assembly and postpolymerase recruitment events in polymerase I (Pol I) transcription. Binds rDNA promoters and plays a role in Pol I recruitment. This chain is TATA box-binding protein-associated factor RNA polymerase I subunit B, found in Caenorhabditis elegans.